Here is a 442-residue protein sequence, read N- to C-terminus: Thymidine phosphorylase (442 aa).

The protein belongs to the thymidine/pyrimidine-nucleoside phosphorylase family. Homodimer.

The catalysed reaction is thymidine + phosphate = 2-deoxy-alpha-D-ribose 1-phosphate + thymine. It participates in pyrimidine metabolism; dTMP biosynthesis via salvage pathway; dTMP from thymine: step 1/2. Functionally, the enzymes which catalyze the reversible phosphorolysis of pyrimidine nucleosides are involved in the degradation of these compounds and in their utilization as carbon and energy sources, or in the rescue of pyrimidine bases for nucleotide synthesis. In Vibrio parahaemolyticus serotype O3:K6 (strain RIMD 2210633), this protein is Thymidine phosphorylase.